Here is a 238-residue protein sequence, read N- to C-terminus: Ribonuclease 3 (238 aa).

The RNase III domain maps to 11-136 (RARLEAAIGY…LIAAIYLDGG (126 aa)). Glu49 contacts Mg(2+). Asp53 is a catalytic residue. Residues Asp122 and Glu125 each contribute to the Mg(2+) site. Glu125 is a catalytic residue. The region spanning 161–230 (DAKTELQEWA…AMKLLEREGV (70 aa)) is the DRBM domain.

The protein belongs to the ribonuclease III family. As to quaternary structure, homodimer. The cofactor is Mg(2+).

Its subcellular location is the cytoplasm. The catalysed reaction is Endonucleolytic cleavage to 5'-phosphomonoester.. Digests double-stranded RNA. Involved in the processing of primary rRNA transcript to yield the immediate precursors to the large and small rRNAs (23S and 16S). Processes some mRNAs, and tRNAs when they are encoded in the rRNA operon. Processes pre-crRNA and tracrRNA of type II CRISPR loci if present in the organism. In Rhizobium meliloti (strain 1021) (Ensifer meliloti), this protein is Ribonuclease 3.